The following is a 359-amino-acid chain: Serine/threonine-protein kinase SAPK7 (359 aa).

One can recognise a Protein kinase domain in the interval 4–260 (YELLKDIGAG…IREIRNHPWF (257 aa)). ATP-binding positions include 10–18 (IGAGNFGVA) and Lys33. Catalysis depends on Asp123, which acts as the Proton acceptor. The tract at residues 299–359 (EEARTPPRSS…VHASGEFQLS (61 aa)) is disordered. The span at 331–343 (EEQEEEEDAEDEY) shows a compositional bias: acidic residues.

Belongs to the protein kinase superfamily. Ser/Thr protein kinase family. Post-translationally, may be phosphorylated. In terms of tissue distribution, weakly expressed in roots. Expressed in roots of young seedlings.

The protein resides in the cytoplasm. The protein localises to the nucleus. The enzyme catalyses L-seryl-[protein] + ATP = O-phospho-L-seryl-[protein] + ADP + H(+). The catalysed reaction is L-threonyl-[protein] + ATP = O-phospho-L-threonyl-[protein] + ADP + H(+). With respect to regulation, activated by hyperosmotic stress. May play a role in signal transduction of hyperosmotic response. This is Serine/threonine-protein kinase SAPK7 (SAPK7) from Oryza sativa subsp. japonica (Rice).